Reading from the N-terminus, the 232-residue chain is 2-C-methyl-D-erythritol 4-phosphate cytidylyltransferase (232 aa).

It belongs to the IspD/TarI cytidylyltransferase family. IspD subfamily.

The catalysed reaction is 2-C-methyl-D-erythritol 4-phosphate + CTP + H(+) = 4-CDP-2-C-methyl-D-erythritol + diphosphate. The protein operates within isoprenoid biosynthesis; isopentenyl diphosphate biosynthesis via DXP pathway; isopentenyl diphosphate from 1-deoxy-D-xylulose 5-phosphate: step 2/6. Catalyzes the formation of 4-diphosphocytidyl-2-C-methyl-D-erythritol from CTP and 2-C-methyl-D-erythritol 4-phosphate (MEP). The chain is 2-C-methyl-D-erythritol 4-phosphate cytidylyltransferase from Nitrosospira multiformis (strain ATCC 25196 / NCIMB 11849 / C 71).